The following is a 589-amino-acid chain: Transcription factor atf-6 homolog (589 aa).

The span at 1 to 16 (MNFDNTVHESNFDDLL) shows a compositional bias: basic and acidic residues. The interval 1 to 82 (MNFDNTVHES…SSPPLSCANF (82 aa)) is disordered. Composition is skewed to low complexity over residues 36-54 (GTDE…FSDQ) and 67-78 (GDSSSDSSPPLS). Residues 250–299 (QNRKIRNRMYAQASRMRKKEADEHMKMNLQELLQENEILRTENAALKQRL) form the bZIP domain. Residues 252-275 (RKIRNRMYAQASRMRKKEADEHMK) are basic motif. Residues 271–305 (DEHMKMNLQELLQENEILRTENAALKQRLAFFEHE) are a coiled coil. The segment at 281–295 (LLQENEILRTENAAL) is leucine-zipper. Residues 324–344 (IIAAGSVLMMFGLFAVISPFN) form a helical membrane-spanning segment.

This sequence belongs to the bZIP family. ATF subfamily.

The protein localises to the nucleus. Its subcellular location is the membrane. Its function is as follows. Transcription factor. Plays a role in the unfolded protein response (UPR), perhaps mainly during constitutive endoplasmic reticulum (ER) stress, by activating transcription of genes involved in the UPR. Plays a role in modulating lifespan, acting by positively regulating expression of calcium-binding chaperone crt-1, thereby influencing ER calcium homeostasis. By activating the UPR pathway, confers adaptive protection to subsequent exposure to hypoxia. Involved in protection against proteotoxicity, probably acting via the UPR. Probably acts in the UPR in parallel with the ire-1-xbp-1 and pek-1 pathways. May be regulated by endopeptidase S2P-mediated proteolytic cleavage. The sequence is that of Transcription factor atf-6 homolog from Caenorhabditis elegans.